We begin with the raw amino-acid sequence, 269 residues long: 4-hydroxy-tetrahydrodipicolinate reductase (269 aa).

NAD(+) is bound by residues 8-13 (GASGRM), Glu-34, 98-100 (GTT), and 122-125 (APNM). Residue His-155 is the Proton donor/acceptor of the active site. His-156 provides a ligand contact to (S)-2,3,4,5-tetrahydrodipicolinate. The active-site Proton donor is the Lys-159. Position 165–166 (165–166 (GT)) interacts with (S)-2,3,4,5-tetrahydrodipicolinate.

Belongs to the DapB family.

The protein localises to the cytoplasm. It carries out the reaction (S)-2,3,4,5-tetrahydrodipicolinate + NAD(+) + H2O = (2S,4S)-4-hydroxy-2,3,4,5-tetrahydrodipicolinate + NADH + H(+). It catalyses the reaction (S)-2,3,4,5-tetrahydrodipicolinate + NADP(+) + H2O = (2S,4S)-4-hydroxy-2,3,4,5-tetrahydrodipicolinate + NADPH + H(+). The protein operates within amino-acid biosynthesis; L-lysine biosynthesis via DAP pathway; (S)-tetrahydrodipicolinate from L-aspartate: step 4/4. Functionally, catalyzes the conversion of 4-hydroxy-tetrahydrodipicolinate (HTPA) to tetrahydrodipicolinate. The polypeptide is 4-hydroxy-tetrahydrodipicolinate reductase (Desulfotalea psychrophila (strain LSv54 / DSM 12343)).